The chain runs to 224 residues: Glycerol-3-phosphate acyltransferase (224 aa).

The next 6 helical transmembrane spans lie at 3–23, 54–74, 90–112, 127–147, 152–172, and 183–203; these read IFLSIAINILIFWIGYLIGSL, VFGYKVAIVILFIDIFKVVFA, LYFYIPLIAGLAAQIGQAYPIYF, LISINVLLWPIAGVFFFLLLF, VSLSSLLTTLIMIGFISIPWM, and GFGQFWVNIIIYLFAAALIFW.

This sequence belongs to the PlsY family. In terms of assembly, probably interacts with PlsX.

The protein localises to the cell membrane. The catalysed reaction is an acyl phosphate + sn-glycerol 3-phosphate = a 1-acyl-sn-glycero-3-phosphate + phosphate. The protein operates within lipid metabolism; phospholipid metabolism. Catalyzes the transfer of an acyl group from acyl-phosphate (acyl-PO(4)) to glycerol-3-phosphate (G3P) to form lysophosphatidic acid (LPA). This enzyme utilizes acyl-phosphate as fatty acyl donor, but not acyl-CoA or acyl-ACP. This is Glycerol-3-phosphate acyltransferase from Mycoplasmopsis synoviae (strain 53) (Mycoplasma synoviae).